Here is a 366-residue protein sequence, read N- to C-terminus: UDP-N-acetylglucosamine--N-acetylmuramyl-(pentapeptide) pyrophosphoryl-undecaprenol N-acetylglucosamine transferase (366 aa).

UDP-N-acetyl-alpha-D-glucosamine is bound by residues 14 to 16, N128, R169, S201, I251, and Q296; that span reads TGG.

The protein belongs to the glycosyltransferase 28 family. MurG subfamily.

The protein resides in the cell inner membrane. The catalysed reaction is di-trans,octa-cis-undecaprenyl diphospho-N-acetyl-alpha-D-muramoyl-L-alanyl-D-glutamyl-meso-2,6-diaminopimeloyl-D-alanyl-D-alanine + UDP-N-acetyl-alpha-D-glucosamine = di-trans,octa-cis-undecaprenyl diphospho-[N-acetyl-alpha-D-glucosaminyl-(1-&gt;4)]-N-acetyl-alpha-D-muramoyl-L-alanyl-D-glutamyl-meso-2,6-diaminopimeloyl-D-alanyl-D-alanine + UDP + H(+). It functions in the pathway cell wall biogenesis; peptidoglycan biosynthesis. Functionally, cell wall formation. Catalyzes the transfer of a GlcNAc subunit on undecaprenyl-pyrophosphoryl-MurNAc-pentapeptide (lipid intermediate I) to form undecaprenyl-pyrophosphoryl-MurNAc-(pentapeptide)GlcNAc (lipid intermediate II). This is UDP-N-acetylglucosamine--N-acetylmuramyl-(pentapeptide) pyrophosphoryl-undecaprenol N-acetylglucosamine transferase from Christiangramia forsetii (strain DSM 17595 / CGMCC 1.15422 / KT0803) (Gramella forsetii).